A 72-amino-acid chain; its full sequence is MQRLVLLLAISLLLYQDLPVRSEFELDRICGYGTARCRKKCRSQEYRIGRCPNTYACCLRKWDESLLNRTKP.

Residues 1-22 form the signal peptide; it reads MQRLVLLLAISLLLYQDLPVRS. Disulfide bonds link Cys-30-Cys-57, Cys-37-Cys-51, and Cys-41-Cys-58.

It belongs to the beta-defensin family. In terms of tissue distribution, high expression in the testis. Gastric antrum exhibited relatively high levels. A lower expression is observed in uterus and neutrophils thyroid gland, lung, and kidney. No detectable expression in other tissues tested.

The protein resides in the secreted. In terms of biological role, has antimicrobial activity. Synergistic effects with lysozyme and DEFB103. The sequence is that of Beta-defensin 104 (DEFB104A) from Homo sapiens (Human).